A 568-amino-acid chain; its full sequence is Protein OCTOPUS-like (568 aa).

Disordered stretches follow at residues 1-27 (MNLSADQAPVTAVDELAPPSQPHRLST), 78-99 (LFKPSSSGTNNSNGNGRVRPGF), 168-203 (EEAEIEEDEENGEKDPGEIVEEKSSEIGEEEEELKP), 242-276 (QKQKVKKPRNGVGGGRPQSEIGVGRRSSDTDPRFS), 360-428 (PGGS…DKKS), 446-512 (DDEE…SKDG), and 526-558 (RSWKTSGGSGGGGGGGGGGGWEKTAAKANSHGH). Residues 82-93 (SSSGTNNSNGNG) show a composition bias toward low complexity. A compositionally biased stretch (acidic residues) spans 168–179 (EEAEIEEDEENG). The segment covering 180–193 (EKDPGEIVEEKSSE) has biased composition (basic and acidic residues). Ser260 is modified (phosphoserine). Over residues 400 to 423 (SVSNSTTTIDSNSMETAENKGNQN) the composition is skewed to polar residues. A compositionally biased stretch (gly residues) spans 532-546 (GGSGGGGGGGGGGGW).

The protein belongs to the OCTOPUS family. Phosphorylation at Ser-260 amplifies the promotion of protophloem differentiation.

Its subcellular location is the cell membrane. The protein localises to the cytoplasm. In terms of biological role, potentiates primary root protophloem differentiation. Regulates roots architecture. This is Protein OCTOPUS-like from Arabidopsis thaliana (Mouse-ear cress).